A 204-amino-acid chain; its full sequence is Small ribosomal subunit protein uS4 (204 aa).

The region spanning Ser93 to Glu156 is the S4 RNA-binding domain.

Belongs to the universal ribosomal protein uS4 family. In terms of assembly, part of the 30S ribosomal subunit. Contacts protein S5. The interaction surface between S4 and S5 is involved in control of translational fidelity.

Functionally, one of the primary rRNA binding proteins, it binds directly to 16S rRNA where it nucleates assembly of the body of the 30S subunit. In terms of biological role, with S5 and S12 plays an important role in translational accuracy. The sequence is that of Small ribosomal subunit protein uS4 from Wolbachia pipientis wMel.